Reading from the N-terminus, the 332-residue chain is Ribosomal RNA small subunit methyltransferase H (332 aa).

S-adenosyl-L-methionine-binding positions include 36 to 38, Asp-54, Phe-81, Asp-102, and Gln-109; that span reads GGY. Residues 295–322 are disordered; sequence PRARSAKLRGAERTESPAHAAGDLPGWP.

Belongs to the methyltransferase superfamily. RsmH family.

The protein localises to the cytoplasm. The enzyme catalyses cytidine(1402) in 16S rRNA + S-adenosyl-L-methionine = N(4)-methylcytidine(1402) in 16S rRNA + S-adenosyl-L-homocysteine + H(+). Specifically methylates the N4 position of cytidine in position 1402 (C1402) of 16S rRNA. The protein is Ribosomal RNA small subunit methyltransferase H of Rhodopseudomonas palustris (strain ATCC BAA-98 / CGA009).